We begin with the raw amino-acid sequence, 700 residues long: Elongation factor G 1 (700 aa).

The tr-type G domain occupies 8-290 (ERYRNIGISA…AVIDYLPSPA (283 aa)). Residues 17 to 24 (AHIDAGKT), 88 to 92 (DTPGH), and 142 to 145 (NKMD) contribute to the GTP site.

This sequence belongs to the TRAFAC class translation factor GTPase superfamily. Classic translation factor GTPase family. EF-G/EF-2 subfamily.

It is found in the cytoplasm. Catalyzes the GTP-dependent ribosomal translocation step during translation elongation. During this step, the ribosome changes from the pre-translocational (PRE) to the post-translocational (POST) state as the newly formed A-site-bound peptidyl-tRNA and P-site-bound deacylated tRNA move to the P and E sites, respectively. Catalyzes the coordinated movement of the two tRNA molecules, the mRNA and conformational changes in the ribosome. The polypeptide is Elongation factor G 1 (Bordetella bronchiseptica (strain ATCC BAA-588 / NCTC 13252 / RB50) (Alcaligenes bronchisepticus)).